Reading from the N-terminus, the 395-residue chain is Imidazolonepropionase (395 aa).

2 residues coordinate Fe(3+): H63 and H65. Residues H63 and H65 each contribute to the Zn(2+) site. 3 residues coordinate 4-imidazolone-5-propanoate: R72, Y135, and H168. Y135 serves as a coordination point for N-formimidoyl-L-glutamate. H233 contacts Fe(3+). H233 serves as a coordination point for Zn(2+). Q236 provides a ligand contact to 4-imidazolone-5-propanoate. D308 serves as a coordination point for Fe(3+). D308 serves as a coordination point for Zn(2+). 2 residues coordinate N-formimidoyl-L-glutamate: N310 and G312. T313 lines the 4-imidazolone-5-propanoate pocket.

Belongs to the metallo-dependent hydrolases superfamily. HutI family. The cofactor is Zn(2+). Requires Fe(3+) as cofactor.

It is found in the cytoplasm. The catalysed reaction is 4-imidazolone-5-propanoate + H2O = N-formimidoyl-L-glutamate. It participates in amino-acid degradation; L-histidine degradation into L-glutamate; N-formimidoyl-L-glutamate from L-histidine: step 3/3. Catalyzes the hydrolytic cleavage of the carbon-nitrogen bond in imidazolone-5-propanoate to yield N-formimidoyl-L-glutamate. It is the third step in the universal histidine degradation pathway. This Cereibacter sphaeroides (strain KD131 / KCTC 12085) (Rhodobacter sphaeroides) protein is Imidazolonepropionase.